The sequence spans 121 residues: Large ribosomal subunit protein bL12 (121 aa).

It belongs to the bacterial ribosomal protein bL12 family. Homodimer. Part of the ribosomal stalk of the 50S ribosomal subunit. Forms a multimeric L10(L12)X complex, where L10 forms an elongated spine to which 2 to 4 L12 dimers bind in a sequential fashion. Binds GTP-bound translation factors.

Functionally, forms part of the ribosomal stalk which helps the ribosome interact with GTP-bound translation factors. Is thus essential for accurate translation. In Shewanella piezotolerans (strain WP3 / JCM 13877), this protein is Large ribosomal subunit protein bL12.